The chain runs to 399 residues: S-adenosylmethionine synthase (399 aa).

ATP is bound at residue histidine 19. Aspartate 21 is a Mg(2+) binding site. Position 47 (glutamate 47) interacts with K(+). L-methionine-binding residues include glutamate 60 and glutamine 103. The tract at residues 103 to 113 is flexible loop; sequence QSPDIAQGVNQ. ATP contacts are provided by residues 179 to 181, 246 to 247, aspartate 255, 261 to 262, alanine 278, and lysine 282; these read DGK, RF, and RK. Residue aspartate 255 participates in L-methionine binding. Lysine 286 contributes to the L-methionine binding site.

This sequence belongs to the AdoMet synthase family. In terms of assembly, homotetramer; dimer of dimers. Requires Mg(2+) as cofactor. It depends on K(+) as a cofactor.

It localises to the cytoplasm. It catalyses the reaction L-methionine + ATP + H2O = S-adenosyl-L-methionine + phosphate + diphosphate. It functions in the pathway amino-acid biosynthesis; S-adenosyl-L-methionine biosynthesis; S-adenosyl-L-methionine from L-methionine: step 1/1. Catalyzes the formation of S-adenosylmethionine (AdoMet) from methionine and ATP. The overall synthetic reaction is composed of two sequential steps, AdoMet formation and the subsequent tripolyphosphate hydrolysis which occurs prior to release of AdoMet from the enzyme. The sequence is that of S-adenosylmethionine synthase from Halalkalibacterium halodurans (strain ATCC BAA-125 / DSM 18197 / FERM 7344 / JCM 9153 / C-125) (Bacillus halodurans).